The following is a 369-amino-acid chain: Protein disulfide-isomerase erp38 (369 aa).

Positions 1–18 are cleaved as a signal peptide; sequence MVLLKSLVVASLAAAVAA. Thioredoxin domains are found at residues 19 to 130 and 131 to 251; these read KSAV…EKTG and VKAR…EKAG. Catalysis depends on nucleophile residues Cys50, Cys53, Cys170, and Cys173. 2 disulfides stabilise this stretch: Cys50–Cys53 and Cys170–Cys173. A Prevents secretion from ER motif is present at residues 366 to 369; sequence KEEL.

Belongs to the protein disulfide isomerase family.

It is found in the endoplasmic reticulum lumen. It carries out the reaction Catalyzes the rearrangement of -S-S- bonds in proteins.. The polypeptide is Protein disulfide-isomerase erp38 (erp38) (Neurospora crassa (strain ATCC 24698 / 74-OR23-1A / CBS 708.71 / DSM 1257 / FGSC 987)).